A 268-amino-acid chain; its full sequence is Homeobox protein CDX-1 (268 aa).

Positions 1-152 (MYVGYVLDKD…AGGGGSGKTR (152 aa)) are disordered. Composition is skewed to pro residues over residues 29–42 (TYAP…PPQY) and 54–67 (APAP…PFPA). The segment covering 73-91 (AAAYGPGPTASAASPAPLA) has biased composition (low complexity). The span at 92–108 (FGPPPDFSPVPAPPGPG) shows a compositional bias: pro residues. Residues 115-128 (SLGAPGAPSSPGAP) show a composition bias toward low complexity. Residues 154–213 (KDKYRVVYTDHQRLELEKEFHYSRYITIRRKSELAANLGLTERQVKIWFQNRRAKERKVN) constitute a DNA-binding region (homeobox). Residues 157-178 (YRVVYTDHQRLELEKEFHYSRY) are interaction with DNA. The interval 196–207 (RQVKIWFQNRRA) is interaction with 5-mCpG DNA. Positions 209-268 (ERKVNKKKQQQQQPLPPTQLPLPLDGTPTPSGPPLGSLCPTNAGLLGTPSPVPVKEEFLP) are disordered. Low complexity predominate over residues 229 to 246 (PLPLDGTPTPSGPPLGSL).

Belongs to the Caudal homeobox family. Intestinal epithelium.

The protein resides in the nucleus. In terms of biological role, plays a role in transcriptional regulation. Involved in activated KRAS-mediated transcriptional activation of PRKD1 in colorectal cancer (CRC) cells. Binds to the PRKD1 promoter in colorectal cancer (CRC) cells. Could play a role in the terminal differentiation of the intestine. Binds preferentially to methylated DNA. This chain is Homeobox protein CDX-1 (Cdx1), found in Mus musculus (Mouse).